We begin with the raw amino-acid sequence, 279 residues long: Shikimate dehydrogenase (NADP(+)) (279 aa).

Shikimate is bound by residues 16–18 (SRS) and T63. K67 functions as the Proton acceptor in the catalytic mechanism. Residues N88 and D103 each coordinate shikimate. Residues 128 to 132 (GAGGA) and M219 contribute to the NADP(+) site. Y221 contacts shikimate. G243 contributes to the NADP(+) binding site.

The protein belongs to the shikimate dehydrogenase family. Homodimer.

The enzyme catalyses shikimate + NADP(+) = 3-dehydroshikimate + NADPH + H(+). The protein operates within metabolic intermediate biosynthesis; chorismate biosynthesis; chorismate from D-erythrose 4-phosphate and phosphoenolpyruvate: step 4/7. Functionally, involved in the biosynthesis of the chorismate, which leads to the biosynthesis of aromatic amino acids. Catalyzes the reversible NADPH linked reduction of 3-dehydroshikimate (DHSA) to yield shikimate (SA). This Aromatoleum aromaticum (strain DSM 19018 / LMG 30748 / EbN1) (Azoarcus sp. (strain EbN1)) protein is Shikimate dehydrogenase (NADP(+)).